A 248-amino-acid chain; its full sequence is 5'-nucleotidase SurE (248 aa).

4 residues coordinate a divalent metal cation: Asp-8, Asp-9, Ser-39, and Asn-91.

Belongs to the SurE nucleotidase family. Requires a divalent metal cation as cofactor.

It is found in the cytoplasm. It carries out the reaction a ribonucleoside 5'-phosphate + H2O = a ribonucleoside + phosphate. Nucleotidase that shows phosphatase activity on nucleoside 5'-monophosphates. The protein is 5'-nucleotidase SurE of Marinomonas sp. (strain MWYL1).